A 163-amino-acid chain; its full sequence is Nucleotide-binding protein CGSHiGG_08790 (163 aa).

This sequence belongs to the YajQ family.

Functionally, nucleotide-binding protein. The sequence is that of Nucleotide-binding protein CGSHiGG_08790 from Haemophilus influenzae (strain PittGG).